The sequence spans 102 residues: Nucleoid-associated protein WS1681 (102 aa).

Belongs to the YbaB/EbfC family. As to quaternary structure, homodimer.

Its subcellular location is the cytoplasm. The protein localises to the nucleoid. Its function is as follows. Binds to DNA and alters its conformation. May be involved in regulation of gene expression, nucleoid organization and DNA protection. The polypeptide is Nucleoid-associated protein WS1681 (Wolinella succinogenes (strain ATCC 29543 / DSM 1740 / CCUG 13145 / JCM 31913 / LMG 7466 / NCTC 11488 / FDC 602W) (Vibrio succinogenes)).